The sequence spans 307 residues: Dioxygenase swnH1 (307 aa).

3 residues coordinate Fe cation: His-149, Asp-151, and His-227.

The protein belongs to the PhyH family. In terms of assembly, homodimer. The cofactor is Fe cation.

It functions in the pathway mycotoxin biosynthesis. Dioxygenase; part of the gene cluster that mediates the biosynthesis of swainsonine (SW), a cytotoxic fungal alkaloid and a potential cancer therapy drug. Swainsonine production occurs via a multibranched pathway and is dispensable for fungal colonization of plants and infection of insect hosts. The first step of swainsonine biosynthesis is the production of the precursor pipecolic acid (PA) via conversion of L-lysine (Lys) to 1-piperideine-6-carboxylate (P6C) by the aminotransferase swnA, the latter being further reduced to PA by the reductase swnR. The PKS-NRPS hybrid synthetase swnK uptakes and condensates PA and malonyl-CoA with and without skipping of the ketoreductase (KR) domain in order to produce 3 intermediates, 1-oxoindolizidine, (1S)-1-hydroxyindolizin, and (1R)-1-hydroxyindolizine; with the transisomer (1S)-1-hydroxyindolizin being predominant. The terminal thioester reductase (TE) domain of swnK is involved in reduction of the thioester bond to release the intermediate aldehydes. The oxidoreductase swnN could contribute to the reduction of 1-oxoindolizidine to (1S)-1-hydroxyindolizin and (1R)-1-hydroxyindolizine, contributing to the major route of SW production. The dioxygenase swnH2 would be responsible for the oxidization of (1R)-1-hydroxyindolizine into (1R,2S)-1,2-dihydroxyindolizine and of (1S)-1-hydroxyindolizin to yield both (1R,2S)-1,2-dihydroxyindolizine and (1S,2S)-1,2-dihydroxyindolizine. The dioxygenase swnH1 then performs the conversion of the 1,2-dihydroxyindolizine epimers to SW. This chain is Dioxygenase swnH1, found in Arthroderma benhamiae (strain ATCC MYA-4681 / CBS 112371) (Trichophyton mentagrophytes).